Here is a 496-residue protein sequence, read N- to C-terminus: Protein RepR (496 aa).

The DNA-binding element occupies 120-141 (SDILTTAIDLGFMPTLIIKSDK).

Essential for replication. This Streptococcus agalactiae protein is Protein RepR (repR).